We begin with the raw amino-acid sequence, 311 residues long: Large ribosomal subunit protein uL18 (311 aa).

It belongs to the universal ribosomal protein uL18 family. As to quaternary structure, component of the large ribosomal subunit (LSU).

It is found in the cytoplasm. Its subcellular location is the nucleus. Functionally, component of the ribosome, a large ribonucleoprotein complex responsible for the synthesis of proteins in the cell. The small ribosomal subunit (SSU) binds messenger RNAs (mRNAs) and translates the encoded message by selecting cognate aminoacyl-transfer RNA (tRNA) molecules. The large subunit (LSU) contains the ribosomal catalytic site termed the peptidyl transferase center (PTC), which catalyzes the formation of peptide bonds, thereby polymerizing the amino acids delivered by tRNAs into a polypeptide chain. The nascent polypeptides leave the ribosome through a tunnel in the LSU and interact with protein factors that function in enzymatic processing, targeting, and the membrane insertion of nascent chains at the exit of the ribosomal tunnel. The polypeptide is Large ribosomal subunit protein uL18 (RPL5) (Eimeria tenella (Coccidian parasite)).